The following is a 180-amino-acid chain: Small ribosomal subunit protein uS5 (180 aa).

Residues 1-26 form a disordered region; it reads MAEEKDKKQSSRRRNNRRTEKESEWQ. A compositionally biased stretch (basic and acidic residues) spans 17-26; it reads RRTEKESEWQ. Residues 25–88 enclose the S5 DRBM domain; sequence WQERVVQIRR…ADGKKHLVNV (64 aa).

It belongs to the universal ribosomal protein uS5 family. As to quaternary structure, part of the 30S ribosomal subunit. Contacts proteins S4 and S8.

In terms of biological role, with S4 and S12 plays an important role in translational accuracy. Its function is as follows. Located at the back of the 30S subunit body where it stabilizes the conformation of the head with respect to the body. This is Small ribosomal subunit protein uS5 from Synechococcus elongatus (strain ATCC 33912 / PCC 7942 / FACHB-805) (Anacystis nidulans R2).